The sequence spans 69 residues: Putative membrane protein insertion efficiency factor (69 aa).

The protein belongs to the UPF0161 family.

It is found in the cell inner membrane. Could be involved in insertion of integral membrane proteins into the membrane. The polypeptide is Putative membrane protein insertion efficiency factor (Azoarcus sp. (strain BH72)).